Here is a 937-residue protein sequence, read N- to C-terminus: Isoleucine--tRNA ligase (937 aa).

The short motif at proline 58 to histidine 68 is the 'HIGH' region element. Glutamate 561 is an L-isoleucyl-5'-AMP binding site. A 'KMSKS' region motif is present at residues lysine 602–serine 606. Lysine 605 serves as a coordination point for ATP. Residues cysteine 900, cysteine 903, cysteine 920, and cysteine 923 each contribute to the Zn(2+) site.

It belongs to the class-I aminoacyl-tRNA synthetase family. IleS type 1 subfamily. Monomer. It depends on Zn(2+) as a cofactor.

The protein localises to the cytoplasm. It catalyses the reaction tRNA(Ile) + L-isoleucine + ATP = L-isoleucyl-tRNA(Ile) + AMP + diphosphate. In terms of biological role, catalyzes the attachment of isoleucine to tRNA(Ile). As IleRS can inadvertently accommodate and process structurally similar amino acids such as valine, to avoid such errors it has two additional distinct tRNA(Ile)-dependent editing activities. One activity is designated as 'pretransfer' editing and involves the hydrolysis of activated Val-AMP. The other activity is designated 'posttransfer' editing and involves deacylation of mischarged Val-tRNA(Ile). The protein is Isoleucine--tRNA ligase of Alcanivorax borkumensis (strain ATCC 700651 / DSM 11573 / NCIMB 13689 / SK2).